The primary structure comprises 123 residues: Small ribosomal subunit protein uS12 (123 aa).

The segment at 1–28 (MPTIQQLIRKPRQPKVKRSKSQHLESCP) is disordered. A compositionally biased stretch (basic residues) spans 9 to 21 (RKPRQPKVKRSKS). Asp89 is modified (3-methylthioaspartic acid).

It belongs to the universal ribosomal protein uS12 family. In terms of assembly, part of the 30S ribosomal subunit. Contacts proteins S8 and S17. May interact with IF1 in the 30S initiation complex.

Functionally, with S4 and S5 plays an important role in translational accuracy. Interacts with and stabilizes bases of the 16S rRNA that are involved in tRNA selection in the A site and with the mRNA backbone. Located at the interface of the 30S and 50S subunits, it traverses the body of the 30S subunit contacting proteins on the other side and probably holding the rRNA structure together. The combined cluster of proteins S8, S12 and S17 appears to hold together the shoulder and platform of the 30S subunit. The protein is Small ribosomal subunit protein uS12 of Dinoroseobacter shibae (strain DSM 16493 / NCIMB 14021 / DFL 12).